A 99-amino-acid chain; its full sequence is Integration host factor subunit alpha (99 aa).

The protein belongs to the bacterial histone-like protein family. As to quaternary structure, heterodimer of an alpha and a beta chain.

Its function is as follows. This protein is one of the two subunits of integration host factor, a specific DNA-binding protein that functions in genetic recombination as well as in transcriptional and translational control. This chain is Integration host factor subunit alpha (ihfA), found in Mannheimia haemolytica (Pasteurella haemolytica).